A 406-amino-acid chain; its full sequence is Tryptophan synthase beta chain (406 aa).

Lysine 99 carries the N6-(pyridoxal phosphate)lysine modification.

Belongs to the TrpB family. As to quaternary structure, tetramer of two alpha and two beta chains. Pyridoxal 5'-phosphate serves as cofactor.

The enzyme catalyses (1S,2R)-1-C-(indol-3-yl)glycerol 3-phosphate + L-serine = D-glyceraldehyde 3-phosphate + L-tryptophan + H2O. Its pathway is amino-acid biosynthesis; L-tryptophan biosynthesis; L-tryptophan from chorismate: step 5/5. In terms of biological role, the beta subunit is responsible for the synthesis of L-tryptophan from indole and L-serine. The polypeptide is Tryptophan synthase beta chain (Brucella abortus (strain 2308)).